We begin with the raw amino-acid sequence, 647 residues long: RAF proto-oncogene serine/threonine-protein kinase (647 aa).

At serine 43 the chain carries Phosphoserine. In terms of domain architecture, RBD spans 56–131 (NTIRVFLPNK…IGEELQVDFL (76 aa)). The Phorbol-ester/DAG-type zinc finger occupies 138–184 (THNFARKTFLKLAFCDICQKFLLNGFRCQTCGYKFHEHCSTKVPTMC). Disordered stretches follow at residues 236 to 269 (HVFT…VSTT) and 284 to 334 (HSES…RPRG). Polar residues predominate over residues 239–269 (TFNTSNPSSEGTLSQRQRSTSTPNVHMVSTT). Serine 259 is subject to Phosphoserine. The residue at position 268 (threonine 268) is a Phosphothreonine; by autocatalysis. Residues 286-297 (ESASPSALSGSP) show a composition bias toward low complexity. The segment covering 298 to 309 (NNMSPTGWSQPK) has biased composition (polar residues). Serine 338 carries the post-translational modification Phosphoserine. Positions 349 to 609 (VMLSTRIGSG…PQILSSIELL (261 aa)) constitute a Protein kinase domain. Residues 355–363 (IGSGSFGTV) and lysine 375 each bind ATP. Aspartate 468 (proton acceptor) is an active-site residue. Phosphoserine occurs at positions 499 and 621.

This sequence belongs to the protein kinase superfamily. TKL Ser/Thr protein kinase family. RAF subfamily. Phosphorylation at Ser-259 inactivates kinase activity. Dephosphorylation of Ser-259 by a complex containing protein phosphatase 1 relieves inactivation, leading to stimulate RAF1 activity. In terms of tissue distribution, isoform 1 was present in all tissues tested: skeletal muscle, intestine, brain, gizzard, heart, lung, kidney, bone marrow, spleen and bursa of Fabricius. Isoform 2 was only detected in brain, heart and skeletal muscle. In brain and heart isoform 1 is more abundant than isoform 2. In skeletal muscle isoform 2 is more abundant than isoform 1.

The protein localises to the cytoplasm. It localises to the cell membrane. It catalyses the reaction L-seryl-[protein] + ATP = O-phospho-L-seryl-[protein] + ADP + H(+). The enzyme catalyses L-threonyl-[protein] + ATP = O-phospho-L-threonyl-[protein] + ADP + H(+). Its function is as follows. Serine/threonine-protein kinase that acts as a regulatory link between the membrane-associated Ras GTPases and the MAPK/ERK cascade, and this critical regulatory link functions as a switch determining cell fate decisions. RAF1 activation initiates a mitogen-activated protein kinase (MAPK) cascade that comprises a sequential phosphorylation of the dual-specific MAPK kinases (MAP2K1/MEK1 and MAP2K2/MEK2) and the extracellular signal-regulated kinases (MAPK3/ERK1 and MAPK1/ERK2). The polypeptide is RAF proto-oncogene serine/threonine-protein kinase (RAF1) (Gallus gallus (Chicken)).